A 91-amino-acid chain; its full sequence is ATP synthase epsilon chain (91 aa).

This sequence belongs to the ATPase epsilon chain family. In terms of assembly, F-type ATPases have 2 components, CF(1) - the catalytic core - and CF(0) - the membrane proton channel. CF(1) has five subunits: alpha(3), beta(3), gamma(1), delta(1), epsilon(1). CF(0) has three main subunits: a, b and c.

The protein localises to the cell membrane. Produces ATP from ADP in the presence of a proton gradient across the membrane. The chain is ATP synthase epsilon chain (atpC) from Micrococcus luteus (strain ATCC 4698 / DSM 20030 / JCM 1464 / CCM 169 / CCUG 5858 / IAM 1056 / NBRC 3333 / NCIMB 9278 / NCTC 2665 / VKM Ac-2230) (Micrococcus lysodeikticus).